The chain runs to 615 residues: UvrABC system protein C (615 aa).

A GIY-YIG domain is found at 12–91 (EKPGVYIMKD…IKKYKPKYNV (80 aa)). A UVR domain is found at 203 to 238 (DWLIQKLKEDMKKAAEELRFEEAARIRDQIFAIERT).

This sequence belongs to the UvrC family. As to quaternary structure, interacts with UvrB in an incision complex.

The protein localises to the cytoplasm. The UvrABC repair system catalyzes the recognition and processing of DNA lesions. UvrC both incises the 5' and 3' sides of the lesion. The N-terminal half is responsible for the 3' incision and the C-terminal half is responsible for the 5' incision. The polypeptide is UvrABC system protein C (Thermoanaerobacter pseudethanolicus (strain ATCC 33223 / 39E) (Clostridium thermohydrosulfuricum)).